The following is a 43-amino-acid chain: Peroxidase (43 aa).

The protein belongs to the peroxidase family. Classical plant (class III) peroxidase subfamily. Ca(2+) serves as cofactor. The cofactor is heme b.

The enzyme catalyses 2 a phenolic donor + H2O2 = 2 a phenolic radical donor + 2 H2O. Functionally, removal of H(2)O(2), oxidation of toxic reductants, biosynthesis and degradation of lignin, suberization, auxin catabolism, response to environmental stresses such as wounding, pathogen attack and oxidative stress. These functions might be dependent on each isozyme/isoform in each plant tissue. The chain is Peroxidase from Cynara cardunculus var. scolymus (Globe artichoke).